The sequence spans 130 residues: Small ribosomal subunit protein uS9 (130 aa).

This sequence belongs to the universal ribosomal protein uS9 family.

This chain is Small ribosomal subunit protein uS9, found in Shewanella pealeana (strain ATCC 700345 / ANG-SQ1).